A 460-amino-acid chain; its full sequence is MLSIYNTLTKSKEVFKPLDGNKVRMYVCGMTVYDYCHLGHGRSMVAFDLVTRWLRFSGYDLTYVRNITDIDDKIINRARDNGESFDALTARMIDAMHEDEARLNILKPDMEPRATDHIPGMHAMIQTLIDKGYAYAPGNGDVYYRVGKFQGYGKLSRKKIEDLRIGARIEVDESKQDPLDFVLWKGVKPGEPSWESPWGAGRPGWHIECSVMSTCCLGDTFDIHGGGSDLEFPHHENEIAQSEAATGKPYANAWLHCGMIRINGEKMSKSLNNFFTLRDVLEKYHPEVVRYLLVSSHYRSAINYSEDSLRESKAALERFYHALKGLPAAEPAGGEAFVERFTTAMNDDFGTPEACAVLFEMVREINRLRETDVAAAAGLAARLKQLASVLGVLQLEADDFLRAGAQGRVDAAEVEALIQARLAARAAKDWAESDRIRDQITAMGVLLEDGKGGTTWRLGD.

Cys-28 is a Zn(2+) binding site. A 'HIGH' region motif is present at residues 30-40 (MTVYDYCHLGH). Positions 209, 234, and 238 each coordinate Zn(2+). Positions 266 to 270 (KMSKS) match the 'KMSKS' region motif. Lys-269 contributes to the ATP binding site.

The protein belongs to the class-I aminoacyl-tRNA synthetase family. Monomer. Requires Zn(2+) as cofactor.

Its subcellular location is the cytoplasm. The catalysed reaction is tRNA(Cys) + L-cysteine + ATP = L-cysteinyl-tRNA(Cys) + AMP + diphosphate. This is Cysteine--tRNA ligase from Pseudomonas syringae pv. tomato (strain ATCC BAA-871 / DC3000).